Reading from the N-terminus, the 131-residue chain is Large ribosomal subunit protein bL19 (131 aa).

This sequence belongs to the bacterial ribosomal protein bL19 family.

Its function is as follows. This protein is located at the 30S-50S ribosomal subunit interface and may play a role in the structure and function of the aminoacyl-tRNA binding site. The sequence is that of Large ribosomal subunit protein bL19 from Anaeromyxobacter sp. (strain K).